A 374-amino-acid chain; its full sequence is Mannitol-1-phosphate 5-dehydrogenase (374 aa).

3–14 contacts NAD(+); the sequence is AVHFGAGNIGRG.

Belongs to the mannitol dehydrogenase family.

The catalysed reaction is D-mannitol 1-phosphate + NAD(+) = beta-D-fructose 6-phosphate + NADH + H(+). The polypeptide is Mannitol-1-phosphate 5-dehydrogenase (Shouchella clausii (strain KSM-K16) (Alkalihalobacillus clausii)).